A 66-amino-acid chain; its full sequence is Large ribosomal subunit protein bL35 (66 aa).

The span at 1–24 (MPKQKTHRGAAKRFKKTGSGKLKR) shows a compositional bias: basic residues. The segment at 1-26 (MPKQKTHRGAAKRFKKTGSGKLKRDH) is disordered.

It belongs to the bacterial ribosomal protein bL35 family.

The polypeptide is Large ribosomal subunit protein bL35 (Bacillus cytotoxicus (strain DSM 22905 / CIP 110041 / 391-98 / NVH 391-98)).